The primary structure comprises 348 residues: Phenylalanine--tRNA ligase alpha subunit (348 aa).

Mg(2+) is bound at residue E262.

Belongs to the class-II aminoacyl-tRNA synthetase family. Phe-tRNA synthetase alpha subunit type 1 subfamily. Tetramer of two alpha and two beta subunits. Mg(2+) is required as a cofactor.

Its subcellular location is the cytoplasm. The catalysed reaction is tRNA(Phe) + L-phenylalanine + ATP = L-phenylalanyl-tRNA(Phe) + AMP + diphosphate + H(+). This is Phenylalanine--tRNA ligase alpha subunit from Streptococcus pneumoniae (strain 70585).